We begin with the raw amino-acid sequence, 88 residues long: Insulin-related peptide 4 (88 aa).

The N-terminal stretch at 1–19 (MKLTLIILLVVAYSWCSEA) is a signal peptide. The propeptide occupies 20–45 (QNEARVFCGRVLSERLAALCWGPNSV). At R65 the chain carries Arginine amide. The propeptide occupies 69–88 (GLATECCDKACTVEELLSYC).

The protein belongs to the insulin family. DAGWWLTRGAARSLGGVR-amide: Expressed in corpora cardiaca (CC), corpora allata (CA), antennal lobe (AL) and gnathal ganglion (GNG) (at protein level). Expression in CC and CA detected in most animals, in AL and GNG in few animals (at protein level).

Its subcellular location is the secreted. In Agrotis ipsilon (Black cutworm moth), this protein is Insulin-related peptide 4.